The primary structure comprises 466 residues: Ribulose bisphosphate carboxylase large chain (466 aa).

K5 carries the N6,N6,N6-trimethyllysine modification. Residues N114 and T164 each coordinate substrate. K166 functions as the Proton acceptor in the catalytic mechanism. A substrate-binding site is contributed by K168. 3 residues coordinate Mg(2+): K192, D194, and E195. An N6-carboxylysine modification is found at K192. Catalysis depends on H285, which acts as the Proton acceptor. Positions 286, 318, and 370 each coordinate substrate.

This sequence belongs to the RuBisCO large chain family. Type I subfamily. As to quaternary structure, heterohexadecamer of 8 large chains and 8 small chains. The cofactor is Mg(2+).

It is found in the plastid. The protein resides in the chloroplast. It catalyses the reaction 2 (2R)-3-phosphoglycerate + 2 H(+) = D-ribulose 1,5-bisphosphate + CO2 + H2O. The catalysed reaction is D-ribulose 1,5-bisphosphate + O2 = 2-phosphoglycolate + (2R)-3-phosphoglycerate + 2 H(+). RuBisCO catalyzes two reactions: the carboxylation of D-ribulose 1,5-bisphosphate, the primary event in carbon dioxide fixation, as well as the oxidative fragmentation of the pentose substrate in the photorespiration process. Both reactions occur simultaneously and in competition at the same active site. The sequence is that of Ribulose bisphosphate carboxylase large chain from Cornus kousa (Kousa dogwood).